Reading from the N-terminus, the 406-residue chain is Nicotinate phosphoribosyltransferase (406 aa).

Phosphohistidine; by autocatalysis is present on His-226.

This sequence belongs to the NAPRTase family. Post-translationally, transiently phosphorylated on a His residue during the reaction cycle. Phosphorylation strongly increases the affinity for substrates and increases the rate of nicotinate D-ribonucleotide production. Dephosphorylation regenerates the low-affinity form of the enzyme, leading to product release.

It catalyses the reaction nicotinate + 5-phospho-alpha-D-ribose 1-diphosphate + ATP + H2O = nicotinate beta-D-ribonucleotide + ADP + phosphate + diphosphate. It participates in cofactor biosynthesis; NAD(+) biosynthesis; nicotinate D-ribonucleotide from nicotinate: step 1/1. In terms of biological role, catalyzes the synthesis of beta-nicotinate D-ribonucleotide from nicotinate and 5-phospho-D-ribose 1-phosphate at the expense of ATP. The protein is Nicotinate phosphoribosyltransferase of Verminephrobacter eiseniae (strain EF01-2).